Consider the following 257-residue polypeptide: NH(3)-dependent NAD(+) synthetase (257 aa).

40-47 contributes to the ATP binding site; sequence GISGGIDS. Aspartate 46 contacts Mg(2+). A deamido-NAD(+)-binding site is contributed by arginine 121. Threonine 141 contacts ATP. Glutamate 146 contacts Mg(2+). Residues lysine 154 and aspartate 161 each contribute to the deamido-NAD(+) site. ATP is bound by residues lysine 170 and serine 192. Deamido-NAD(+) is bound at residue 238-239; it reads HK.

It belongs to the NAD synthetase family. As to quaternary structure, homodimer.

It carries out the reaction deamido-NAD(+) + NH4(+) + ATP = AMP + diphosphate + NAD(+) + H(+). It functions in the pathway cofactor biosynthesis; NAD(+) biosynthesis; NAD(+) from deamido-NAD(+) (ammonia route): step 1/1. Its function is as follows. Catalyzes the ATP-dependent amidation of deamido-NAD to form NAD. Uses ammonia as a nitrogen source. The protein is NH(3)-dependent NAD(+) synthetase of Mycoplasmopsis pulmonis (strain UAB CTIP) (Mycoplasma pulmonis).